The following is a 297-amino-acid chain: Ribosomal protein L11 methyltransferase (297 aa).

The S-adenosyl-L-methionine site is built by Thr152, Gly173, Asp195, and Asn234.

This sequence belongs to the methyltransferase superfamily. PrmA family.

It localises to the cytoplasm. It catalyses the reaction L-lysyl-[protein] + 3 S-adenosyl-L-methionine = N(6),N(6),N(6)-trimethyl-L-lysyl-[protein] + 3 S-adenosyl-L-homocysteine + 3 H(+). Methylates ribosomal protein L11. The chain is Ribosomal protein L11 methyltransferase from Cupriavidus pinatubonensis (strain JMP 134 / LMG 1197) (Cupriavidus necator (strain JMP 134)).